The following is a 387-amino-acid chain: Galactokinase (387 aa).

Residue 33–36 participates in substrate binding; that stretch reads EHID. Residues Ser-67 and 124–130 each bind ATP; that span reads GAGLSSS. The Mg(2+) site is built by Ser-130 and Glu-162. Catalysis depends on Asp-174, which acts as the Proton acceptor. Residue Tyr-224 participates in substrate binding.

Belongs to the GHMP kinase family. GalK subfamily.

It localises to the cytoplasm. The catalysed reaction is alpha-D-galactose + ATP = alpha-D-galactose 1-phosphate + ADP + H(+). It functions in the pathway carbohydrate metabolism; galactose metabolism. Catalyzes the transfer of the gamma-phosphate of ATP to D-galactose to form alpha-D-galactose-1-phosphate (Gal-1-P). The protein is Galactokinase of Clostridium perfringens (strain ATCC 13124 / DSM 756 / JCM 1290 / NCIMB 6125 / NCTC 8237 / Type A).